The chain runs to 189 residues: Ribosome maturation factor RimP (189 aa).

It belongs to the RimP family.

It localises to the cytoplasm. In terms of biological role, required for maturation of 30S ribosomal subunits. This chain is Ribosome maturation factor RimP, found in Mycobacteroides abscessus (strain ATCC 19977 / DSM 44196 / CCUG 20993 / CIP 104536 / JCM 13569 / NCTC 13031 / TMC 1543 / L948) (Mycobacterium abscessus).